The primary structure comprises 428 residues: Trigger factor (428 aa).

A PPIase FKBP-type domain is found at G163 to P248.

This sequence belongs to the FKBP-type PPIase family. Tig subfamily.

It is found in the cytoplasm. It catalyses the reaction [protein]-peptidylproline (omega=180) = [protein]-peptidylproline (omega=0). In terms of biological role, involved in protein export. Acts as a chaperone by maintaining the newly synthesized protein in an open conformation. Functions as a peptidyl-prolyl cis-trans isomerase. This is Trigger factor from Geobacillus kaustophilus (strain HTA426).